Reading from the N-terminus, the 216-residue chain is Imidazoleglycerol-phosphate dehydratase (216 aa).

Position 211 is a phosphoserine (S211).

Belongs to the imidazoleglycerol-phosphate dehydratase family.

It carries out the reaction D-erythro-1-(imidazol-4-yl)glycerol 3-phosphate = 3-(imidazol-4-yl)-2-oxopropyl phosphate + H2O. The protein operates within amino-acid biosynthesis; L-histidine biosynthesis; L-histidine from 5-phospho-alpha-D-ribose 1-diphosphate: step 6/9. The polypeptide is Imidazoleglycerol-phosphate dehydratase (his5) (Schizosaccharomyces pombe (strain 972 / ATCC 24843) (Fission yeast)).